Reading from the N-terminus, the 340-residue chain is Speriolin-like protein (340 aa).

Disordered stretches follow at residues 42 to 73 (GGGH…RFTS) and 94 to 135 (APLS…KLSP). Ser60 carries the post-translational modification Phosphoserine. Basic and acidic residues predominate over residues 123–133 (PHSHRGTDRKL). Phosphoserine is present on Ser134.

The protein belongs to the speriolin family.

Its subcellular location is the cytoplasm. In Homo sapiens (Human), this protein is Speriolin-like protein (SPATC1L).